The chain runs to 630 residues: Biosynthetic arginine decarboxylase (630 aa).

N6-(pyridoxal phosphate)lysine is present on Lys99. Residue Val281–Tyr291 participates in substrate binding.

This sequence belongs to the Orn/Lys/Arg decarboxylase class-II family. SpeA subfamily. Requires Mg(2+) as cofactor. It depends on pyridoxal 5'-phosphate as a cofactor.

The catalysed reaction is L-arginine + H(+) = agmatine + CO2. It participates in amine and polyamine biosynthesis; agmatine biosynthesis; agmatine from L-arginine: step 1/1. Functionally, catalyzes the biosynthesis of agmatine from arginine. The sequence is that of Biosynthetic arginine decarboxylase from Phocaeicola vulgatus (strain ATCC 8482 / DSM 1447 / JCM 5826 / CCUG 4940 / NBRC 14291 / NCTC 11154) (Bacteroides vulgatus).